Consider the following 185-residue polypeptide: Ribosome-recycling factor (185 aa).

This sequence belongs to the RRF family.

It is found in the cytoplasm. In terms of biological role, responsible for the release of ribosomes from messenger RNA at the termination of protein biosynthesis. May increase the efficiency of translation by recycling ribosomes from one round of translation to another. This is Ribosome-recycling factor from Chloroflexus aggregans (strain MD-66 / DSM 9485).